Reading from the N-terminus, the 159-residue chain is 2-amino-4-hydroxy-6-hydroxymethyldihydropteridine pyrophosphokinase (159 aa).

Belongs to the HPPK family. Monomer.

The catalysed reaction is 6-hydroxymethyl-7,8-dihydropterin + ATP = (7,8-dihydropterin-6-yl)methyl diphosphate + AMP + H(+). The protein operates within cofactor biosynthesis; tetrahydrofolate biosynthesis; 2-amino-4-hydroxy-6-hydroxymethyl-7,8-dihydropteridine diphosphate from 7,8-dihydroneopterin triphosphate: step 4/4. Catalyzes the transfer of pyrophosphate from adenosine triphosphate (ATP) to 6-hydroxymethyl-7,8-dihydropterin, an enzymatic step in folate biosynthesis pathway. This is 2-amino-4-hydroxy-6-hydroxymethyldihydropteridine pyrophosphokinase (folK) from Escherichia coli (strain K12).